The following is a 430-amino-acid chain: Pre-mRNA-processing protein 45 (430 aa).

The span at 1 to 26 (MSFRTLSSLLPSPQNSEVSESSAFSR) shows a compositional bias: polar residues. Disordered stretches follow at residues 1–28 (MSFR…SRQS), 280–299 (MERN…NKMS), and 370–430 (PTTG…PHTS).

It belongs to the SNW family. Associated with the spliceosome.

It localises to the nucleus. Functionally, involved in pre-mRNA splicing. The chain is Pre-mRNA-processing protein 45 (PRP45) from Kluyveromyces lactis (strain ATCC 8585 / CBS 2359 / DSM 70799 / NBRC 1267 / NRRL Y-1140 / WM37) (Yeast).